A 752-amino-acid polypeptide reads, in one-letter code: Glutamate carboxypeptidase 2 (752 aa).

Topologically, residues 1-22 (MWNALQDRDSAEVLGHRQRWLR) are cytoplasmic. The residue at position 10 (Ser-10) is a Phosphoserine. Residues 23 to 44 (VGTLVLALTGTFLIGFLFGWFI) traverse the membrane as a helical; Signal-anchor for type II membrane protein segment. At 45–752 (KPSNEATGNV…AAAETLREVA (708 aa)) the chain is on the extracellular side. Residues Asn-78, Asn-123, and Asn-155 are each glycosylated (N-linked (GlcNAc...) asparagine). Substrate is bound by residues Arg-212 and Asn-259. Ca(2+)-binding residues include Thr-271 and Tyr-274. Positions 276–589 (ANEHAYRHEL…QVRGAMVFEL (314 aa)) are NAALADase. The N-linked (GlcNAc...) asparagine glycan is linked to Asn-338. Positions 379 and 389 each coordinate Zn(2+). Glu-426 provides a ligand contact to substrate. The Nucleophile; for NAALADase activity role is filled by Glu-426. Zn(2+) is bound at residue Glu-427. Glu-435 and Glu-438 together coordinate Ca(2+). Asp-455 is a Zn(2+) binding site. N-linked (GlcNAc...) asparagine glycans are attached at residues Asn-461 and Asn-478. Residues 519-520 (SG), Asn-521, 536-538 (RAR), Tyr-554, and 554-555 (YH) contribute to the substrate site. His-555 serves as a coordination point for Zn(2+). N-linked (GlcNAc...) asparagine glycosylation is present at Asn-615. Ser-630 acts as the Charge relay system in catalysis. N-linked (GlcNAc...) asparagine glycosylation is present at Asn-640. Catalysis depends on charge relay system residues Asp-668 and His-691. Position 701–702 (701–702 (KY)) interacts with substrate. A glycan (N-linked (GlcNAc...) asparagine) is linked at Asn-722.

This sequence belongs to the peptidase M28 family. M28B subfamily. Homodimer. It depends on Zn(2+) as a cofactor. Expressed predominantly in the hippocampal region of the brain and in kidney. Lower levels in the ovary, testis and mandibular gland.

The protein localises to the cell membrane. It carries out the reaction Release of an unsubstituted, C-terminal glutamyl residue, typically from Ac-Asp-Glu or folylpoly-gamma-glutamates.. With respect to regulation, the NAALADase and folate hydrolase activities are inhibited by quisqualic acid. Has both folate hydrolase and N-acetylated-alpha-linked-acidic dipeptidase (NAALADase) activity. Has a preference for tri-alpha-glutamate peptides. In the intestine, required for the uptake of folate. In the brain, modulates excitatory neurotransmission through the hydrolysis of the neuropeptide, N-aceylaspartylglutamate (NAAG), thereby releasing glutamate. Its function is as follows. Also exhibits a dipeptidyl-peptidase IV type activity. In vitro, cleaves Gly-Pro-AMC. The protein is Glutamate carboxypeptidase 2 (Folh1) of Mus musculus (Mouse).